The sequence spans 438 residues: Ubiquitin carboxyl-terminal hydrolase 27 (438 aa).

Positions 78–421 constitute a USP domain; sequence RGLINLGNTC…EGYLLFYHKQ (344 aa). The active-site Nucleophile is cysteine 87. Histidine 380 serves as the catalytic Proton acceptor.

This sequence belongs to the peptidase C19 family. Interacts with phosphorylated BCL2L11 isoform BIMEL; this interaction leads to BCL2L11 deubiquitination and stabilization.

It localises to the cytoplasm. Its subcellular location is the cytosol. It is found in the nucleus. The catalysed reaction is Thiol-dependent hydrolysis of ester, thioester, amide, peptide and isopeptide bonds formed by the C-terminal Gly of ubiquitin (a 76-residue protein attached to proteins as an intracellular targeting signal).. Functionally, deubiquitinase involved in innate antiviral immunity by mediating deubiquitination of CGAS and RIGI. Negatively regulates RIGI by mediating 'Lys-63'-linked deubiquitination of RIGI, inhibiting type I interferon signaling. Also regulates 'Lys-63'-linked ubiquitination level of MDA5/IFIH1. Acts as a positive regulator of the cGAS-STING pathway by catalyzing 'Lys-48'-linked deubiquitination of CGAS, thereby promoting its stabilization. Can reduce the levels of BCL2L11/BIM ubiquitination and stabilize BCL2L11 in response to the RAF-MAPK-degradation signal. By acting on BCL2L11 levels, may counteract the anti-apoptotic effects of MAPK activity. In Homo sapiens (Human), this protein is Ubiquitin carboxyl-terminal hydrolase 27.